Reading from the N-terminus, the 764-residue chain is 5-methyltetrahydropteroyltriglutamate--homocysteine methyltransferase (764 aa).

Residues 16-19 (RELK) and K121 each bind 5-methyltetrahydropteroyltri-L-glutamate. L-homocysteine is bound by residues 440–442 (IGS) and E493. L-methionine-binding positions include 440–442 (IGS) and E493. 5-methyltetrahydropteroyltri-L-glutamate contacts are provided by residues 524-525 (RC) and W570. D608 is a binding site for L-homocysteine. An L-methionine-binding site is contributed by D608. A 5-methyltetrahydropteroyltri-L-glutamate-binding site is contributed by E614. Residues H650, C652, and E674 each contribute to the Zn(2+) site. H703 (proton donor) is an active-site residue. Residue C735 participates in Zn(2+) binding.

It belongs to the vitamin-B12 independent methionine synthase family. It depends on Zn(2+) as a cofactor.

The enzyme catalyses 5-methyltetrahydropteroyltri-L-glutamate + L-homocysteine = tetrahydropteroyltri-L-glutamate + L-methionine. Its pathway is amino-acid biosynthesis; L-methionine biosynthesis via de novo pathway; L-methionine from L-homocysteine (MetE route): step 1/1. Its function is as follows. Catalyzes the transfer of a methyl group from 5-methyltetrahydrofolate to homocysteine resulting in methionine formation. The chain is 5-methyltetrahydropteroyltriglutamate--homocysteine methyltransferase from Burkholderia ambifaria (strain MC40-6).